The chain runs to 936 residues: Phosphoenolpyruvate carboxylase (936 aa).

Catalysis depends on residues His-155 and Lys-595.

Belongs to the PEPCase type 1 family. In terms of assembly, homotetramer. The cofactor is Mg(2+). Requires Mn(2+) as cofactor.

It carries out the reaction oxaloacetate + phosphate = phosphoenolpyruvate + hydrogencarbonate. With respect to regulation, exhibits positive allosteric property with acetyl-CoA and fructose 1,6-bisphosphate, and a negative one with L-aspartate and L-malate. Its function is as follows. Forms oxaloacetate, a four-carbon dicarboxylic acid source for the tricarboxylic acid cycle. This chain is Phosphoenolpyruvate carboxylase (ppc), found in Rhodothermus marinus (Rhodothermus obamensis).